Reading from the N-terminus, the 254-residue chain is MGYLHDAFSLKGKTALVTGPGTGIGQGIAKALAGAGADIIGTSHTSSLSETQQLVEQEGRIFTSFTLDMSKPEAIKDSAAELFENRQIDILVNNAGIIHREKAEDFPEENWQHVLNVNLNSLFILTQLAGRHMLKRGHGKIINIASLLSFQGGILVPAYTASKHAVAGLTKSFANEWAASGIQVNAIAPGYISTANTKPIRDDEKRNEDILKRIPAGRWGQADDIGGTAVFLASRASDYVNGHILAVDGGWLSR.

16-40 (LVTGPGTGIGQGIAKALAGAGADII) is a binding site for NAD(+). Ser-146 lines the substrate pocket. Tyr-159 serves as the catalytic Proton acceptor.

This sequence belongs to the short-chain dehydrogenases/reductases (SDR) family.

It carries out the reaction 2-dehydro-3-deoxy-D-gluconate + NAD(+) = 3-deoxy-D-glycero-2,5-hexodiulosonate + NADH + H(+). The protein operates within glycan metabolism; pectin degradation; 2-dehydro-3-deoxy-D-gluconate from pectin: step 5/5. In terms of biological role, catalyzes the reduction of 2,5-diketo-3-deoxygluconate (DKII or 4,6-dihydroxy-2,5-dioxohexanoate) into 2-keto-3-deoxygluconate (KDG or 2-dehydro-3-deoxygluconate) with a concomitant oxidation of NADH. This Bacillus subtilis (strain 168) protein is 2-dehydro-3-deoxy-D-gluconate 5-dehydrogenase (kduD).